The sequence spans 293 residues: Ribosomal protein L11 methyltransferase (293 aa).

Positions 145, 166, 188, and 230 each coordinate S-adenosyl-L-methionine.

The protein belongs to the methyltransferase superfamily. PrmA family.

The protein localises to the cytoplasm. The enzyme catalyses L-lysyl-[protein] + 3 S-adenosyl-L-methionine = N(6),N(6),N(6)-trimethyl-L-lysyl-[protein] + 3 S-adenosyl-L-homocysteine + 3 H(+). Its function is as follows. Methylates ribosomal protein L11. This chain is Ribosomal protein L11 methyltransferase, found in Yersinia pseudotuberculosis serotype I (strain IP32953).